A 386-amino-acid chain; its full sequence is Eukaryotic translation initiation factor 3 subunit M (386 aa).

The 163-residue stretch at 181–343 folds into the PCI domain; that stretch reads NSELASKVMI…RKVHISSTMH (163 aa).

This sequence belongs to the eIF-3 subunit M family. In terms of assembly, component of the eukaryotic translation initiation factor 3 (eIF-3) complex.

The protein resides in the cytoplasm. In terms of biological role, component of the eukaryotic translation initiation factor 3 (eIF-3) complex, which is involved in protein synthesis of a specialized repertoire of mRNAs and, together with other initiation factors, stimulates binding of mRNA and methionyl-tRNAi to the 40S ribosome. The eIF-3 complex specifically targets and initiates translation of a subset of mRNAs involved in cell proliferation. The sequence is that of Eukaryotic translation initiation factor 3 subunit M from Culex quinquefasciatus (Southern house mosquito).